The primary structure comprises 374 residues: N-acetyldiaminopimelate deacetylase (374 aa).

D69 is an active-site residue. The active-site Proton acceptor is the E128.

Belongs to the peptidase M20A family. N-acetyldiaminopimelate deacetylase subfamily.

It carries out the reaction N-acetyl-(2S,6S)-2,6-diaminopimelate + H2O = (2S,6S)-2,6-diaminopimelate + acetate. It participates in amino-acid biosynthesis; L-lysine biosynthesis via DAP pathway; LL-2,6-diaminopimelate from (S)-tetrahydrodipicolinate (acetylase route): step 3/3. Functionally, catalyzes the conversion of N-acetyl-diaminopimelate to diaminopimelate and acetate. This chain is N-acetyldiaminopimelate deacetylase (ykuR), found in Bacillus subtilis (strain 168).